A 699-amino-acid polypeptide reads, in one-letter code: Serine/threonine-protein kinase PRR2 (699 aa).

The segment at 168-193 is disordered; it reads SSTKKNLANDISDNKHNNNSSNTIGH. Residues 184 to 193 are compositionally biased toward polar residues; sequence NNNSSNTIGH. The Protein kinase domain maps to 361–653; the sequence is RDLDVVLGEG…INGILQDGWI (293 aa). Residues 367–375 and lysine 390 contribute to the ATP site; that span reads LGEGSGGKV. The active-site Proton acceptor is the aspartate 484.

Belongs to the protein kinase superfamily. Ser/Thr protein kinase family.

It catalyses the reaction L-seryl-[protein] + ATP = O-phospho-L-seryl-[protein] + ADP + H(+). The catalysed reaction is L-threonyl-[protein] + ATP = O-phospho-L-threonyl-[protein] + ADP + H(+). Its function is as follows. Protein kinase that functions as a regulator in the pheromone-induced mating pathway downstream of mitogen-activated protein kinase (MAPK) FUS3. Diminishes transcriptional induction of genes in response to pheromone signaling. The chain is Serine/threonine-protein kinase PRR2 (PRR2) from Saccharomyces cerevisiae (strain ATCC 204508 / S288c) (Baker's yeast).